The sequence spans 73 residues: Mu-conotoxin SIIIA (73 aa).

The first 20 residues, Met1–Ala20, serve as a signal peptide directing secretion. A disordered region spans residues Ala20–Ile40. A propeptide spanning residues Leu21–Asp49 is cleaved from the precursor. A compositionally biased stretch (basic and acidic residues) spans Pro28–Ile40. Pyrrolidone carboxylic acid is present on Gln52. Disulfide bonds link Cys54-Cys64, Cys55-Cys70, and Cys59-Cys71. Cysteine amide is present on Cys71.

The protein belongs to the conotoxin M superfamily. In terms of tissue distribution, expressed by the venom duct.

The protein localises to the secreted. In terms of biological role, mu-conotoxins block voltage-gated sodium channels (Nav). This toxin moderately blocks rNav1.1/SCN1A, rNav1.2/SCN2A, rNav1.3/SCN3A, rNav1.4/SCN4A, and mNav1.6/SCN8A. The chain is Mu-conotoxin SIIIA from Conus striatus (Striated cone).